Reading from the N-terminus, the 305-residue chain is Ribonuclease BN (305 aa).

Zn(2+) contacts are provided by His64, His66, Asp68, His69, His141, Asp212, and His270. Asp68 acts as the Proton acceptor in catalysis.

It belongs to the RNase Z family. RNase BN subfamily. Homodimer. Zn(2+) serves as cofactor.

Its function is as follows. Zinc phosphodiesterase, which has both exoribonuclease and endoribonuclease activities. In Salmonella agona (strain SL483), this protein is Ribonuclease BN.